Reading from the N-terminus, the 1293-residue chain is Phosphoribosylformylglycinamidine synthase (1293 aa).

Residues 305-316 (GAATGSGGEIRD) and A676 contribute to the ATP site. The tract at residues 305–328 (GAATGSGGEIRDEGATGRGSKPKA) is disordered. The Mg(2+) site is built by D677, E716, N720, and D884. S886 provides a ligand contact to ATP. One can recognise a Glutamine amidotransferase type-1 domain in the interval 1040–1293 (MAILREQGVN…MFRNARVNLG (254 aa)). C1133 acts as the Nucleophile in catalysis. Residues H1258 and E1260 contribute to the active site.

The protein in the N-terminal section; belongs to the FGAMS family. Monomer.

Its subcellular location is the cytoplasm. The enzyme catalyses N(2)-formyl-N(1)-(5-phospho-beta-D-ribosyl)glycinamide + L-glutamine + ATP + H2O = 2-formamido-N(1)-(5-O-phospho-beta-D-ribosyl)acetamidine + L-glutamate + ADP + phosphate + H(+). It functions in the pathway purine metabolism; IMP biosynthesis via de novo pathway; 5-amino-1-(5-phospho-D-ribosyl)imidazole from N(2)-formyl-N(1)-(5-phospho-D-ribosyl)glycinamide: step 1/2. Phosphoribosylformylglycinamidine synthase involved in the purines biosynthetic pathway. Catalyzes the ATP-dependent conversion of formylglycinamide ribonucleotide (FGAR) and glutamine to yield formylglycinamidine ribonucleotide (FGAM) and glutamate. The polypeptide is Phosphoribosylformylglycinamidine synthase (Shewanella sp. (strain MR-7)).